A 187-amino-acid chain; its full sequence is Adenylate kinase (187 aa).

10-15 (GSGKGT) serves as a coordination point for ATP. The segment at 30-59 (STGDLLRAEVAAGSPLGLKAKEVMARGDLV) is NMP. AMP contacts are provided by residues T31, R36, 57-59 (DLV), 85-88 (GYPR), and Q92. The interval 126–136 (GRAKAEGREDD) is LID. R127 contributes to the ATP binding site. The AMP site is built by R133 and R144. G172 is an ATP binding site.

This sequence belongs to the adenylate kinase family. In terms of assembly, monomer.

It localises to the cytoplasm. The catalysed reaction is AMP + ATP = 2 ADP. It functions in the pathway purine metabolism; AMP biosynthesis via salvage pathway; AMP from ADP: step 1/1. In terms of biological role, catalyzes the reversible transfer of the terminal phosphate group between ATP and AMP. Plays an important role in cellular energy homeostasis and in adenine nucleotide metabolism. The chain is Adenylate kinase from Xanthomonas campestris pv. campestris (strain 8004).